Here is a 156-residue protein sequence, read N- to C-terminus: Ribosome-binding factor A (156 aa).

Positions 125–138 (RVREGAKHAGDPDP) are enriched in basic and acidic residues. The disordered stretch occupies residues 125–156 (RVREGAKHAGDPDPYRVGGAEDTDGDTDGDER). The segment covering 145 to 156 (EDTDGDTDGDER) has biased composition (acidic residues).

The protein belongs to the RbfA family. In terms of assembly, monomer. Binds 30S ribosomal subunits, but not 50S ribosomal subunits or 70S ribosomes.

It is found in the cytoplasm. Functionally, one of several proteins that assist in the late maturation steps of the functional core of the 30S ribosomal subunit. Associates with free 30S ribosomal subunits (but not with 30S subunits that are part of 70S ribosomes or polysomes). Required for efficient processing of 16S rRNA. May interact with the 5'-terminal helix region of 16S rRNA. This is Ribosome-binding factor A from Mycolicibacterium smegmatis (strain ATCC 700084 / mc(2)155) (Mycobacterium smegmatis).